The following is a 271-amino-acid chain: 3-methyl-2-oxobutanoate hydroxymethyltransferase (271 aa).

Positions 51 and 90 each coordinate Mg(2+). 3-methyl-2-oxobutanoate contacts are provided by residues 51–52 (DS), aspartate 90, and lysine 119. Position 121 (glutamate 121) interacts with Mg(2+). Residue glutamate 188 is the Proton acceptor of the active site.

Belongs to the PanB family. Homodecamer; pentamer of dimers. It depends on Mg(2+) as a cofactor.

The protein localises to the cytoplasm. The catalysed reaction is 3-methyl-2-oxobutanoate + (6R)-5,10-methylene-5,6,7,8-tetrahydrofolate + H2O = 2-dehydropantoate + (6S)-5,6,7,8-tetrahydrofolate. It participates in cofactor biosynthesis; (R)-pantothenate biosynthesis; (R)-pantoate from 3-methyl-2-oxobutanoate: step 1/2. Its function is as follows. Catalyzes the reversible reaction in which hydroxymethyl group from 5,10-methylenetetrahydrofolate is transferred onto alpha-ketoisovalerate to form ketopantoate. In Azoarcus sp. (strain BH72), this protein is 3-methyl-2-oxobutanoate hydroxymethyltransferase.